We begin with the raw amino-acid sequence, 2225 residues long: Multifunctional protein CAD (2225 aa).

Residue Ala2 is modified to N-acetylalanine. The GATase (Glutamine amidotransferase) stretch occupies residues 2-365; it reads AALVLEDGSV…TVREAVAGNP (364 aa). Positions 44, 222, and 224 each coordinate L-glutamine. A Glutamine amidotransferase type-1 domain is found at 177 to 363; the sequence is RICALDCGLK…LETVREAVAG (187 aa). The active-site Nucleophile; for GATase activity is the Cys252. L-glutamine-binding residues include Leu253, Gln256, Asn294, Gly296, and Phe297. Residues His336 and Glu338 each act as for GATase activity in the active site. Positions 366–394 are linker; that stretch reads GGQTVKERLVQRLCPPGLLIPGSGLPPPR. Residues 395-933 are CPSase A; sequence KVLILGSGGL…NTHDLDFRTP (539 aa). Positions 395 to 1455 are CPSase (Carbamoyl phosphate synthase); the sequence is KVLILGSGGL…APPLKVHVDC (1061 aa). Thr456 bears the Phosphothreonine; by MAPK1 mark. ATP is bound by residues Arg515, Arg555, Gly561, Gly562, Lys592, Glu599, Gly625, Ile626, His627, Gln668, and Glu682. The 193-residue stretch at 519–711 folds into the ATP-grasp 1 domain; the sequence is AARMAEIGEH…LAYVAAKLAL (193 aa). Residues Gln668, Glu682, and Asn684 each contribute to the Mg(2+) site. Mn(2+) is bound by residues Gln668, Glu682, and Asn684. Residue Lys747 is modified to N6-acetyllysine. Residues 934-1455 are CPSase B; the sequence is HVLVLGSGVY…APPLKVHVDC (522 aa). Position 1038 is a phosphoserine (Ser1038). The ATP-grasp 2 domain maps to 1052-1243; sequence SRLLDTIGIS…LVALATRIIM (192 aa). 10 residues coordinate ATP: Arg1088, Lys1127, Ile1129, Glu1134, Gly1159, Val1160, His1161, Ser1162, Gln1202, and Glu1214. Mg(2+) contacts are provided by Gln1202, Glu1214, and Asn1216. Positions 1202, 1214, and 1216 each coordinate Mn(2+). The 155-residue stretch at 1308–1462 folds into the MGS-like domain; sequence FKIPKKNILL…VDCMTSQKLV (155 aa). The residue at position 1406 (Ser1406) is a Phosphoserine; by PKA. Lys1411 is modified (N6-acetyllysine). The interval 1456–1788 is DHOase (dihydroorotase); that stretch reads MTSQKLVRLP…VKGTIRRVVL (333 aa). Positions 1471 and 1473 each coordinate Zn(2+). Residues Arg1475 and Asn1505 each contribute to the (S)-dihydroorotate site. 5 residues coordinate Zn(2+): Lys1556, His1590, Cys1613, His1614, and Glu1637. Lys1556 is modified (N6-carboxylysine). Arg1661 lines the (S)-dihydroorotate pocket. Asp1686 lines the Zn(2+) pocket. The active-site For DHOase activity is the Asp1686. His1690 and Pro1702 together coordinate (S)-dihydroorotate. The linker stretch occupies residues 1789–1917; the sequence is RGEVAYIDGQ…GLLHPQTSPL (129 aa). The interval 1813–1911 is disordered; sequence PQGAVPQPPP…QNLGSSGLLH (99 aa). The span at 1825–1834 shows a compositional bias: low complexity; it reads PATTEITTTP. At Ser1859 the chain carries Phosphoserine; by RPS6KB1 and PKA. Positions 1866 to 1878 are enriched in basic and acidic residues; that stretch reads EEPKEKPSRKVVE. Ser1873 bears the Phosphoserine; by PKC; in vitro mark. Thr1884 is modified (phosphothreonine). The segment covering 1899 to 1911 has biased composition (polar residues); sequence ASPQNLGSSGLLH. 2 positions are modified to phosphoserine: Ser1900 and Ser1938. The interval 1918-2225 is ATCase (Aspartate transcarbamylase); the sequence is LHSLVGQHIL…ALLATVLGRF (308 aa). Carbamoyl phosphate is bound by residues Arg1975 and Thr1976. Lys2003 contacts L-aspartate. Positions 2024, 2052, and 2055 each coordinate carbamoyl phosphate. The L-aspartate site is built by Arg2085 and Arg2146. Carbamoyl phosphate contacts are provided by Met2185 and Pro2186.

In the N-terminal section; belongs to the CarA family. It in the 2nd section; belongs to the CarB family. This sequence in the 3rd section; belongs to the metallo-dependent hydrolases superfamily. DHOase family. CAD subfamily. The protein in the C-terminal section; belongs to the aspartate/ornithine carbamoyltransferase superfamily. ATCase family. As to quaternary structure, homohexamer. Interacts with CIPC. Requires Zn(2+) as cofactor. It depends on Mg(2+) as a cofactor. The cofactor is Mn(2+). Post-translationally, activated by MAP kinase (Erk1/2) phosphorylation just prior to the S phase of the cell cycle, when the demand for pyrimidine nucleotides is greatest, and down-regulated as the cells emerge from S phase by protein kinase A (PKA) phosphorylation. Phosphorylation at Ser-1859 by RPS6KB1 downstream of MTOR promotes oligomerization and stimulates dihydroorotase activity. Phosphorylation at Ser-1406 reduces sensitivity to feedback inhibition by UTP.

The protein localises to the cytoplasm. It localises to the nucleus. The enzyme catalyses hydrogencarbonate + L-glutamine + 2 ATP + H2O = carbamoyl phosphate + L-glutamate + 2 ADP + phosphate + 2 H(+). It catalyses the reaction L-glutamine + H2O = L-glutamate + NH4(+). The catalysed reaction is hydrogencarbonate + NH4(+) + 2 ATP = carbamoyl phosphate + 2 ADP + phosphate + 2 H(+). It carries out the reaction carbamoyl phosphate + L-aspartate = N-carbamoyl-L-aspartate + phosphate + H(+). The enzyme catalyses (S)-dihydroorotate + H2O = N-carbamoyl-L-aspartate + H(+). The protein operates within pyrimidine metabolism; UMP biosynthesis via de novo pathway; (S)-dihydroorotate from bicarbonate: step 1/3. It participates in pyrimidine metabolism; UMP biosynthesis via de novo pathway; (S)-dihydroorotate from bicarbonate: step 2/3. It functions in the pathway pyrimidine metabolism; UMP biosynthesis via de novo pathway; (S)-dihydroorotate from bicarbonate: step 3/3. Its activity is regulated as follows. Allosterically regulated and controlled by phosphorylation. 5-phosphoribose 1-diphosphate (PRPP) is an activator while UMP and UTP are inhibitors of the CPSase reaction. In terms of biological role, multifunctional protein that encodes the first 3 enzymatic activities of the de novo pyrimidine pathway: carbamoylphosphate synthetase (CPSase; EC 6.3.5.5), aspartate transcarbamylase (ATCase; EC 2.1.3.2) and dihydroorotase (DHOase; EC 3.5.2.3). The CPSase-function is accomplished in 2 steps, by a glutamine-dependent amidotransferase activity (GATase) that binds and cleaves glutamine to produce ammonia, followed by an ammonium-dependent carbamoyl phosphate synthetase, which reacts with the ammonia, hydrogencarbonate and ATP to form carbamoyl phosphate. The endogenously produced carbamoyl phosphate is sequestered and channeled to the ATCase active site. ATCase then catalyzes the formation of carbamoyl-L-aspartate from L-aspartate and carbamoyl phosphate. In the last step, DHOase catalyzes the cyclization of carbamoyl aspartate to dihydroorotate. In Mesocricetus auratus (Golden hamster), this protein is Multifunctional protein CAD (CAD).